The primary structure comprises 190 residues: Glutathione peroxidase 2 (190 aa).

Residue U40 is part of the active site. U40 is a non-standard amino acid (selenocysteine).

This sequence belongs to the glutathione peroxidase family. In terms of assembly, homotetramer. As to expression, mostly in liver and gastrointestinal tract, not found in heart or kidney.

Its subcellular location is the cytoplasm. It is found in the cytosol. The catalysed reaction is 2 glutathione + H2O2 = glutathione disulfide + 2 H2O. The enzyme catalyses a hydroperoxy polyunsaturated fatty acid + 2 glutathione = a hydroxy polyunsaturated fatty acid + glutathione disulfide + H2O. It catalyses the reaction tert-butyl hydroperoxide + 2 glutathione = tert-butanol + glutathione disulfide + H2O. It carries out the reaction cumene hydroperoxide + 2 glutathione = 2-phenylpropan-2-ol + glutathione disulfide + H2O. The catalysed reaction is (13S)-hydroperoxy-(9Z,11E)-octadecadienoate + 2 glutathione = (13S)-hydroxy-(9Z,11E)-octadecadienoate + glutathione disulfide + H2O. The enzyme catalyses (5S)-hydroperoxy-(6E,8Z,11Z,14Z)-eicosatetraenoate + 2 glutathione = (5S)-hydroxy-(6E,8Z,11Z,14Z)-eicosatetraenoate + glutathione disulfide + H2O. It catalyses the reaction (12R)-hydroperoxy-(5Z,8Z,10E,14Z)-eicosatetraenoate + 2 glutathione = (12R)-hydroxy-(5Z,8Z,10E,14Z)-eicosatetraenoate + glutathione disulfide + H2O. It carries out the reaction (15S)-hydroperoxy-(5Z,8Z,11Z,13E)-eicosatetraenoate + 2 glutathione = (15S)-hydroxy-(5Z,8Z,11Z,13E)-eicosatetraenoate + glutathione disulfide + H2O. Catalyzes the reduction of hydroperoxides in a glutathione-dependent manner thus regulating cellular redox homeostasis. Can reduce small soluble hydroperoxides such as H2O2, cumene hydroperoxide and tert-butyl hydroperoxide, as well as several fatty acid-derived hydroperoxides. Cannot reduce phosphatidycholine hydroperoxide. The polypeptide is Glutathione peroxidase 2 (Homo sapiens (Human)).